Consider the following 333-residue polypeptide: Probable malate dehydrogenase 3 (333 aa).

Residue 12-18 participates in NAD(+) binding; sequence GAAGQIA. 2 residues coordinate substrate: arginine 93 and arginine 99. NAD(+)-binding positions include asparagine 106, glutamine 113, and 130–132; that span reads VGN. Positions 132 and 163 each coordinate substrate. Histidine 188 serves as the catalytic Proton acceptor.

It belongs to the LDH/MDH superfamily. MDH type 2 family. In terms of assembly, homodimer.

The enzyme catalyses (S)-malate + NAD(+) = oxaloacetate + NADH + H(+). Functionally, catalyzes the reversible oxidation of malate to oxaloacetate. The sequence is that of Probable malate dehydrogenase 3 (mdhC) from Dictyostelium discoideum (Social amoeba).